The chain runs to 430 residues: Adenylosuccinate synthetase (430 aa).

GTP contacts are provided by residues 12-18 (GDEGKGK) and 40-42 (GHT). Asp13 (proton acceptor) is an active-site residue. Mg(2+) is bound by residues Asp13 and Gly40. IMP-binding positions include 13 to 16 (DEGK), 38 to 41 (NAGH), Thr128, Arg142, Gln223, Thr238, and Arg302. His41 (proton donor) is an active-site residue. 298–304 (TTTGRPR) is a substrate binding site. GTP-binding positions include Arg304, 330–332 (SID), and 412–414 (SVG).

This sequence belongs to the adenylosuccinate synthetase family. Homodimer. Mg(2+) serves as cofactor.

It localises to the cytoplasm. The catalysed reaction is IMP + L-aspartate + GTP = N(6)-(1,2-dicarboxyethyl)-AMP + GDP + phosphate + 2 H(+). It functions in the pathway purine metabolism; AMP biosynthesis via de novo pathway; AMP from IMP: step 1/2. Functionally, plays an important role in the de novo pathway of purine nucleotide biosynthesis. Catalyzes the first committed step in the biosynthesis of AMP from IMP. This is Adenylosuccinate synthetase from Streptococcus pyogenes serotype M12 (strain MGAS9429).